The chain runs to 160 residues: Keratin-associated protein 9-6 (160 aa).

16 consecutive repeat copies span residues 4–8 (CCSPG), 13–17 (CCRTT), 18–22 (CCRTT), 37–41 (CCQPS), 42–46 (CCVSS), 47–51 (CCQPY), 56–60 (CCQNT), 61–65 (CCRTT), 66–70 (CCQPT), 75–79 (CCQPS), 80–84 (CCSTP), 90–94 (CCGSS), 95–99 (CCGQT), 140–144 (CCQPC), 149–153 (CCVSS), and 154–158 (CCQHS). The segment at 4–158 (CCSPGCQPTC…CCVSSCCQHS (155 aa)) is 16 X 5 AA repeats of C-C-[GSVRQ]-[QTSPHN]-[TPSGYC].

Belongs to the KRTAP type 9 family. In terms of assembly, interacts with hair keratins.

Functionally, in the hair cortex, hair keratin intermediate filaments are embedded in an interfilamentous matrix, consisting of hair keratin-associated proteins (KRTAP), which are essential for the formation of a rigid and resistant hair shaft through their extensive disulfide bond cross-linking with abundant cysteine residues of hair keratins. The matrix proteins include the high-sulfur and high-glycine-tyrosine keratins. The protein is Keratin-associated protein 9-6 of Homo sapiens (Human).